A 93-amino-acid polypeptide reads, in one-letter code: Alpha-defensin 10 (93 aa).

Positions 1-19 (MKTLVLLSALVLLAFQVQA) are cleaved as a signal peptide. A propeptide spanning residues 20 to 58 (DPIQNTDEETKTEEQPGEDDQAVSVSFGDPEGSSLQEES) is cleaved from the precursor. A disordered region spans residues 22-56 (IQNTDEETKTEEQPGEDDQAVSVSFGDPEGSSLQE). 3 disulfide bridges follow: Cys-64-Cys-92, Cys-66-Cys-81, and Cys-71-Cys-91.

This sequence belongs to the alpha-defensin family. Paneth cells of the small bowel.

Its subcellular location is the secreted. Probably contributes to the antimicrobial barrier function of the small bowel mucosa. This chain is Alpha-defensin 10 (Defa10), found in Mus musculus (Mouse).